A 181-amino-acid polypeptide reads, in one-letter code: Protein OPG005 (181 aa).

This chain is Protein OPG005 (OPG005), found in Vaccinia virus (strain Copenhagen) (VACV).